The primary structure comprises 912 residues: Translation initiation factor IF-2 (912 aa).

Residues 185 to 204 (NATRPKRKTKEEKQKEREER) form a disordered region. Residues 193-204 (TKEEKQKEREER) are compositionally biased toward basic and acidic residues. One can recognise a tr-type G domain in the interval 411-581 (LRPPIVTIMG…LLEAELLDLK (171 aa)). Positions 420–427 (GHVDHGKT) are G1. GTP is bound at residue 420–427 (GHVDHGKT). Residues 445–449 (GITQH) form a G2 region. Residues 467-470 (DTPG) form a G3 region. Residues 467–471 (DTPGH) and 521–524 (NKID) contribute to the GTP site. Positions 521–524 (NKID) are G4. The G5 stretch occupies residues 557 to 559 (SAK).

Belongs to the TRAFAC class translation factor GTPase superfamily. Classic translation factor GTPase family. IF-2 subfamily.

It is found in the cytoplasm. Its function is as follows. One of the essential components for the initiation of protein synthesis. Protects formylmethionyl-tRNA from spontaneous hydrolysis and promotes its binding to the 30S ribosomal subunits. Also involved in the hydrolysis of GTP during the formation of the 70S ribosomal complex. This Azobacteroides pseudotrichonymphae genomovar. CFP2 protein is Translation initiation factor IF-2.